The chain runs to 365 residues: DNA N6-methyl methyltransferase (365 aa).

It belongs to the MT-A70-like family.

It carries out the reaction a 2'-deoxyadenosine in DNA + S-adenosyl-L-methionine = an N(6)-methyl-2'-deoxyadenosine in DNA + S-adenosyl-L-homocysteine + H(+). Functionally, methylates DNA on the 6th position of adenine (N(6)-methyladenosine). N(6)-methyladenosine (m6A) DNA is involved in epigenetic transgenerational inheritance. The chain is DNA N6-methyl methyltransferase from Caenorhabditis elegans.